A 154-amino-acid chain; its full sequence is 6,7-dimethyl-8-ribityllumazine synthase (154 aa).

5-amino-6-(D-ribitylamino)uracil contacts are provided by residues Trp-22, 56–58, and 80–82; these read SHE and AVI. (2S)-2-hydroxy-3-oxobutyl phosphate is bound at residue 85 to 86; sequence DT. Residue His-88 is the Proton donor of the active site. Phe-113 is a binding site for 5-amino-6-(D-ribitylamino)uracil. Arg-127 serves as a coordination point for (2S)-2-hydroxy-3-oxobutyl phosphate.

It belongs to the DMRL synthase family.

It carries out the reaction (2S)-2-hydroxy-3-oxobutyl phosphate + 5-amino-6-(D-ribitylamino)uracil = 6,7-dimethyl-8-(1-D-ribityl)lumazine + phosphate + 2 H2O + H(+). Its pathway is cofactor biosynthesis; riboflavin biosynthesis; riboflavin from 2-hydroxy-3-oxobutyl phosphate and 5-amino-6-(D-ribitylamino)uracil: step 1/2. In terms of biological role, catalyzes the formation of 6,7-dimethyl-8-ribityllumazine by condensation of 5-amino-6-(D-ribitylamino)uracil with 3,4-dihydroxy-2-butanone 4-phosphate. This is the penultimate step in the biosynthesis of riboflavin. The sequence is that of 6,7-dimethyl-8-ribityllumazine synthase from Deinococcus geothermalis (strain DSM 11300 / CIP 105573 / AG-3a).